Consider the following 426-residue polypeptide: Serine--tRNA ligase (426 aa).

A disordered region spans residues 36 to 66 (KRKHLQERTQDLQSQRNTISKEIGQKKAKGE). Residues 46-55 (DLQSQRNTIS) show a composition bias toward polar residues. Position 233–235 (233–235 (TAE)) interacts with L-serine. Position 264-266 (264-266 (RSE)) interacts with ATP. L-serine is bound at residue Glu-287. 351–354 (EISS) lines the ATP pocket. Ser-387 lines the L-serine pocket.

It belongs to the class-II aminoacyl-tRNA synthetase family. Type-1 seryl-tRNA synthetase subfamily. In terms of assembly, homodimer. The tRNA molecule binds across the dimer.

The protein localises to the cytoplasm. The catalysed reaction is tRNA(Ser) + L-serine + ATP = L-seryl-tRNA(Ser) + AMP + diphosphate + H(+). The enzyme catalyses tRNA(Sec) + L-serine + ATP = L-seryl-tRNA(Sec) + AMP + diphosphate + H(+). Its pathway is aminoacyl-tRNA biosynthesis; selenocysteinyl-tRNA(Sec) biosynthesis; L-seryl-tRNA(Sec) from L-serine and tRNA(Sec): step 1/1. Functionally, catalyzes the attachment of serine to tRNA(Ser). Is also able to aminoacylate tRNA(Sec) with serine, to form the misacylated tRNA L-seryl-tRNA(Sec), which will be further converted into selenocysteinyl-tRNA(Sec). This chain is Serine--tRNA ligase, found in Francisella tularensis subsp. holarctica (strain FTNF002-00 / FTA).